The sequence spans 288 residues: Bifunctional protein FolD (288 aa).

NADP(+) is bound by residues 166-168 (GAS) and I232.

Belongs to the tetrahydrofolate dehydrogenase/cyclohydrolase family. As to quaternary structure, homodimer.

It carries out the reaction (6R)-5,10-methylene-5,6,7,8-tetrahydrofolate + NADP(+) = (6R)-5,10-methenyltetrahydrofolate + NADPH. The catalysed reaction is (6R)-5,10-methenyltetrahydrofolate + H2O = (6R)-10-formyltetrahydrofolate + H(+). Its pathway is one-carbon metabolism; tetrahydrofolate interconversion. Its function is as follows. Catalyzes the oxidation of 5,10-methylenetetrahydrofolate to 5,10-methenyltetrahydrofolate and then the hydrolysis of 5,10-methenyltetrahydrofolate to 10-formyltetrahydrofolate. In Shigella dysenteriae serotype 1 (strain Sd197), this protein is Bifunctional protein FolD.